The primary structure comprises 209 residues: Uracil phosphoribosyltransferase (209 aa).

5-phospho-alpha-D-ribose 1-diphosphate-binding positions include Arg-79, Arg-104, and 131–139 (DPLLATGNS). Uracil-binding positions include Ile-194 and 199-201 (GDA). Residue Asp-200 coordinates 5-phospho-alpha-D-ribose 1-diphosphate.

The protein belongs to the UPRTase family. Requires Mg(2+) as cofactor.

It carries out the reaction UMP + diphosphate = 5-phospho-alpha-D-ribose 1-diphosphate + uracil. The protein operates within pyrimidine metabolism; UMP biosynthesis via salvage pathway; UMP from uracil: step 1/1. Its activity is regulated as follows. Allosterically activated by GTP. In terms of biological role, catalyzes the conversion of uracil and 5-phospho-alpha-D-ribose 1-diphosphate (PRPP) to UMP and diphosphate. In Rhodococcus opacus (strain B4), this protein is Uracil phosphoribosyltransferase.